A 291-amino-acid polypeptide reads, in one-letter code: MTTLAIDIGGTKLAAALIDNNLRISQRRELPTPASKTPDALREALKALVEPLRAEARQVAIASTGIIQEGMLLALNPHNLGGLLHFPLVQTLEAIAGLPTLAVNDAQAAAWAEYHALPDDIRDMVFITVSTGVGGGVVCDGKLLTGKGGLAGHLGHTLADPHGPVCGCGRVGCVEAIASGRGMAAAARDDLAGCDAKTLFIRAGEGHQQARHLVSQSAQVIARMIADVKATTDCQCVVIGGSVGLAEGYLEQVRAFLMQEPAPYHVALSAARYRHDAGLLGAALLAQGDTL.

ATP is bound by residues 5 to 12 (AIDIGGTK) and 132 to 139 (GVGGGVVC). Histidine 156, cysteine 166, cysteine 168, and cysteine 173 together coordinate Zn(2+).

The protein belongs to the ROK (NagC/XylR) family. NanK subfamily. Homodimer.

It carries out the reaction an N-acyl-D-mannosamine + ATP = an N-acyl-D-mannosamine 6-phosphate + ADP + H(+). Its pathway is amino-sugar metabolism; N-acetylneuraminate degradation; D-fructose 6-phosphate from N-acetylneuraminate: step 2/5. Its function is as follows. Catalyzes the phosphorylation of N-acetylmannosamine (ManNAc) to ManNAc-6-P. In Salmonella paratyphi A (strain ATCC 9150 / SARB42), this protein is N-acetylmannosamine kinase.